A 387-amino-acid chain; its full sequence is 8-amino-7-oxononanoate synthase (387 aa).

109–110 lines the pyridoxal 5'-phosphate pocket; that stretch reads GY. Residue H134 participates in substrate binding. Positions 182, 214, and 242 each coordinate pyridoxal 5'-phosphate. Position 245 is an N6-(pyridoxal phosphate)lysine (K245). Substrate is bound at residue T359.

Belongs to the class-II pyridoxal-phosphate-dependent aminotransferase family. BioF subfamily. Homodimer. Requires pyridoxal 5'-phosphate as cofactor.

The enzyme catalyses 6-carboxyhexanoyl-[ACP] + L-alanine + H(+) = (8S)-8-amino-7-oxononanoate + holo-[ACP] + CO2. It participates in cofactor biosynthesis; biotin biosynthesis. Functionally, catalyzes the decarboxylative condensation of pimeloyl-[acyl-carrier protein] and L-alanine to produce 8-amino-7-oxononanoate (AON), [acyl-carrier protein], and carbon dioxide. The sequence is that of 8-amino-7-oxononanoate synthase from Haemophilus ducreyi (strain 35000HP / ATCC 700724).